The chain runs to 211 residues: Proteasome subunit beta (211 aa).

The propeptide at 1 to 9 (MDNDKYLKG) is removed in mature form; by autocatalysis. Thr-10 (nucleophile) is an active-site residue.

Belongs to the peptidase T1B family. As to quaternary structure, the 20S proteasome core is composed of 14 alpha and 14 beta subunits that assemble into four stacked heptameric rings, resulting in a barrel-shaped structure. The two inner rings, each composed of seven catalytic beta subunits, are sandwiched by two outer rings, each composed of seven alpha subunits. The catalytic chamber with the active sites is on the inside of the barrel. Has a gated structure, the ends of the cylinder being occluded by the N-termini of the alpha-subunits. Is capped at one or both ends by the proteasome regulatory ATPase, PAN.

The protein localises to the cytoplasm. It carries out the reaction Cleavage of peptide bonds with very broad specificity.. With respect to regulation, the formation of the proteasomal ATPase PAN-20S proteasome complex, via the docking of the C-termini of PAN into the intersubunit pockets in the alpha-rings, triggers opening of the gate for substrate entry. Interconversion between the open-gate and close-gate conformations leads to a dynamic regulation of the 20S proteasome proteolysis activity. Component of the proteasome core, a large protease complex with broad specificity involved in protein degradation. The protein is Proteasome subunit beta of Methanosarcina barkeri (strain Fusaro / DSM 804).